We begin with the raw amino-acid sequence, 270 residues long: Small ribosomal subunit protein uS2 (270 aa).

The protein belongs to the universal ribosomal protein uS2 family. Component of the small ribosomal subunit. Mature ribosomes consist of a small (40S) and a large (60S) subunit. The 40S subunit contains about 33 different proteins and 1 molecule of RNA (18S). The 60S subunit contains about 49 different proteins and 3 molecules of RNA (28S, 5.8S and 5S). Interacts with oho23B/rpS21.

It is found in the cytoplasm. The protein resides in the nucleus. Its function is as follows. Required for the assembly and/or stability of the 40S ribosomal subunit. Required for the processing of the 20S rRNA-precursor to mature 18S rRNA in a late step of the maturation of 40S ribosomal subunits. Required during oogenesis and imaginal development. The protein is Small ribosomal subunit protein uS2 of Drosophila persimilis (Fruit fly).